We begin with the raw amino-acid sequence, 285 residues long: Pantothenate synthetase (285 aa).

30–37 is a binding site for ATP; sequence MGYLHAGH. The active-site Proton donor is the H37. Q61 contacts (R)-pantoate. Beta-alanine is bound at residue Q61. ATP is bound at residue 147 to 150; sequence GQKD. Q153 lines the (R)-pantoate pocket. Residues V176 and 184–187 contribute to the ATP site; that span reads LSSR.

This sequence belongs to the pantothenate synthetase family. Homodimer.

Its subcellular location is the cytoplasm. The catalysed reaction is (R)-pantoate + beta-alanine + ATP = (R)-pantothenate + AMP + diphosphate + H(+). It participates in cofactor biosynthesis; (R)-pantothenate biosynthesis; (R)-pantothenate from (R)-pantoate and beta-alanine: step 1/1. Catalyzes the condensation of pantoate with beta-alanine in an ATP-dependent reaction via a pantoyl-adenylate intermediate. In Solidesulfovibrio magneticus (strain ATCC 700980 / DSM 13731 / RS-1) (Desulfovibrio magneticus), this protein is Pantothenate synthetase.